A 106-amino-acid polypeptide reads, in one-letter code: Movement protein TGB2 (106 aa).

Residues 1 to 9 (MPLTPPPDH) are Cytoplasmic-facing. Residues 10–30 (TKVLLVAAIGLSIVASILTYS) form a helical membrane-spanning segment. At 31–71 (RNTLPQVGDHSHLLPHGGVYKDGTKTIVYGGPRKLNSLEGG) the chain is on the lumenal side. Residues 72–92 (FNLPVQPWFLVILLSAAIFLL) form a helical membrane-spanning segment. Topologically, residues 93–106 (SCRSGHRRVCGQCH) are cytoplasmic.

The protein belongs to the Tymovirales TGBp2 protein family.

It is found in the host endoplasmic reticulum membrane. Its function is as follows. Plays a role in viral cell-to-cell propagation, by facilitating genome transport to neighboring plant cells through plasmosdesmata,. The polypeptide is Movement protein TGB2 (Chrysanthemum morifolium (Florist's daisy)).